The sequence spans 210 residues: MLTTMKKSSLVLALFAIAATALVTITYALTKDQIAYQQQQQLLSVLNQVVPKEQHDNELYKACVLVKNKDALGSKQAMPIYLASLNGQHSGAAIEAIAPDGYSGNIKIIVGVDSDAMVTGVRVLSHQETPGLGDKIDIRITRWVDGFLGKTVENAEDKNWAVQKDGGQFDQFTGATITPRAVVKAVKRAVWFYKTHQEELQTLPLNCETK.

The helical transmembrane segment at 9-29 (SLVLALFAIAATALVTITYAL) threads the bilayer. T176 is modified (FMN phosphoryl threonine).

Belongs to the RnfG family. As to quaternary structure, the complex is composed of six subunits: RnfA, RnfB, RnfC, RnfD, RnfE and RnfG. FMN serves as cofactor.

The protein resides in the cell inner membrane. In terms of biological role, part of a membrane-bound complex that couples electron transfer with translocation of ions across the membrane. In Aliivibrio fischeri (strain ATCC 700601 / ES114) (Vibrio fischeri), this protein is Ion-translocating oxidoreductase complex subunit G.